An 817-amino-acid polypeptide reads, in one-letter code: DNA gyrase subunit A (817 aa).

Residues 39-505 form the Topo IIA-type catalytic domain; it reads LPDARDGLKP…AVEDVSIEDL (467 aa). Residue Tyr-127 is the O-(5'-phospho-DNA)-tyrosine intermediate of the active site. Positions 532–538 match the GyrA-box motif; the sequence is QGRGGKG.

This sequence belongs to the type II topoisomerase GyrA/ParC subunit family. Heterotetramer, composed of two GyrA and two GyrB chains. In the heterotetramer, GyrA contains the active site tyrosine that forms a transient covalent intermediate with DNA, while GyrB binds cofactors and catalyzes ATP hydrolysis.

It localises to the cytoplasm. The catalysed reaction is ATP-dependent breakage, passage and rejoining of double-stranded DNA.. Functionally, a type II topoisomerase that negatively supercoils closed circular double-stranded (ds) DNA in an ATP-dependent manner to modulate DNA topology and maintain chromosomes in an underwound state. Negative supercoiling favors strand separation, and DNA replication, transcription, recombination and repair, all of which involve strand separation. Also able to catalyze the interconversion of other topological isomers of dsDNA rings, including catenanes and knotted rings. Type II topoisomerases break and join 2 DNA strands simultaneously in an ATP-dependent manner. This is DNA gyrase subunit A from Aminobacterium colombiense (strain DSM 12261 / ALA-1).